Consider the following 523-residue polypeptide: Translation initiation factor eIF2B subunit delta (523 aa).

The segment at 1 to 154 is disordered; that stretch reads MAAVAVAVRE…EHTQADDPTL (154 aa). The residue at position 2 (alanine 2) is an N-acetylalanine. At serine 12 the chain carries Phosphoserine. Residues 31 to 40 are compositionally biased toward basic and acidic residues; that stretch reads MTQEEKLQLR. Residues 41–51 show a composition bias toward basic residues; it reads KEKKQQKKKRK. A Phosphothreonine modification is found at threonine 85. Residues 95 to 120 show a composition bias toward basic and acidic residues; that stretch reads TKAELRAERRAKQEAERALKQARKGE. Serine 129 bears the Phosphoserine mark. A may bind the chemical integrated stress response (ISR) inhibitor ISRIB region spans residues 170-179; that stretch reads RKDYGSKVSL.

The protein belongs to the eIF-2B alpha/beta/delta subunits family. Component of the translation initiation factor 2B (eIF2B) complex which is a heterodecamer of two sets of five different subunits: alpha, beta, gamma, delta and epsilon. Subunits alpha, beta and delta comprise a regulatory subcomplex and subunits epsilon and gamma comprise a catalytic subcomplex. Within the complex, the hexameric regulatory complex resides at the center, with the two heterodimeric catalytic subcomplexes bound on opposite sides.

It is found in the cytoplasm. The protein localises to the cytosol. With respect to regulation, activated by the chemical integrated stress response (ISR) inhibitor ISRIB which stimulates guanine nucleotide exchange factor activity for both phosphorylated and unphosphorylated eIF2. Functionally, acts as a component of the translation initiation factor 2B (eIF2B) complex, which catalyzes the exchange of GDP for GTP on eukaryotic initiation factor 2 (eIF2) gamma subunit. Its guanine nucleotide exchange factor activity is repressed when bound to eIF2 complex phosphorylated on the alpha subunit, thereby limiting the amount of methionyl-initiator methionine tRNA available to the ribosome and consequently global translation is repressed. This Oryctolagus cuniculus (Rabbit) protein is Translation initiation factor eIF2B subunit delta (EIF2B4).